A 1179-amino-acid chain; its full sequence is MARIPRCDFLRPPGIYYLITSLLAGLFLPPAIAFNLDVMGAIRKEGEPGSLFGFSVALHRQLQPRPQSWLLVGAPQALALPGQQANRTGGLFACPLSLEETDCYRVDIDRGANVQKESKENQWLGVSVRSQGAGGKIVTCAHRYESRQRVDQALETRDVIGRCFVLSQDLAIRDELDGGEWKFCEGRPQGHEQFGFCQQGTAATFSPDSHYLVFGAPGTYNWKGTARVELCAQGSPDLAHLDDGPYEAGGEKEQDPRLIPVPANSYLGLLFVTNIDSSDPDQLVYKTLDPADRLTGPAGDLTLNSYLGFSIDSGKGLMRSEELSFVAGAPRANHKGAVVILRKDSATRLIPEVVLSGERLTSGFGYSLAVTDLNNDGWADLIVGAPYFFERQEELGGAVYVYMNQGGHWADISPLRICGSPDSMFGISLAVLGDLNQDGFPDIAVGAPFDGDGKVFIYHGSSLGVVVKPSQVLEGEAVGIKSFGYSLSGGLDVDGNHYPDLLVGSLADTAALFRARPVLHVSQEIFIDPRAIDLEQPNCADGRLVCVDIKICFSYVAVPSSYSPSVALDYMLDGDTDRRLRGQVPRVTFLSRGLDDLRHQSSGTVWLKHQHDRVCGDTVFQLQENVKDKLRAIVVTLSYGLRTPPLGRQAPGQELPTVAPILNAHQPSTQRTEIHFLKQGCGQDKICQSNLQLERYQFCSRISDTEFQALPMDLDGRTALFALSGQPFIGLELTVTNLPSDPSRPQADGDDAHEAQLLVTLPASLRYSGVRALDSVEKPLCLSNDSASHVECELGNPMKRGAQVTFYLILSTSGITIETTELEVKLLLATISEQELDPVSVRAHVFIELPLSISGVATPQQLFFSGEVKGESAMRSERELGRKVKYEVTVSNQGQSLNTLGSANLNIMWPHEIANGKWLLYPMRVELEGGQGPGKRGICSPRPNILQLDVDSRDRRRRELGQPEPQEPPEKVEPSTSWWPVSSAEKRNMTLDCPRTAKCVVFSCPLYSFDRAAVLHVWGRLWNSTFLEEYMAVKSLEVIVRANITVKSSIKNLLLRDASTVIPVMVYLDPMAVVVEGVPWWVILLGVLAGLLVLALLVLLLWKLGFFKRAKHPEATVPQYHAVKIPREDRQQFKEEKTGTIQRSNWGNSQWEGSDAHPILAADWHPELGPDGHPVPATA.

The signal sequence occupies residues 1–33 (MARIPRCDFLRPPGIYYLITSLLAGLFLPPAIA). Residues 34 to 1076 (FNLDVMGAIR…YLDPMAVVVE (1043 aa)) lie on the Extracellular side of the membrane. FG-GAP repeat units lie at residues 38-103 (VMGA…ETDC), 110-175 (RGAN…IRDE), 185-238 (EGRP…SPDL), 292-349 (DRLT…ATRL), 350-411 (IPEV…HWAD), 412-467 (ISPL…GVVV), and 471-530 (QVLE…IDPR). N86 carries N-linked (GlcNAc...) asparagine glycosylation. Intrachain disulfides connect C94–C103, C140–C163, and C184–C197. Ca(2+)-binding residues include D372, N374, D376, D380, D434, N436, D438, D442, D492, D494, N496, Y498, and D500. Cystine bridges form between C539/C546, C552/C615, C681/C687, C781/C792, C939/C993, and C999/C1004. N784 is a glycosylation site (N-linked (GlcNAc...) asparagine). Residues 952-961 (SRDRRRRELG) are compositionally biased toward basic and acidic residues. The segment at 952–978 (SRDRRRRELGQPEPQEPPEKVEPSTSW) is disordered. N-linked (GlcNAc...) asparagine glycosylation occurs at N988. N1023 and N1043 each carry an N-linked (GlcNAc...) asparagine glycan. Residues 1077-1102 (GVPWWVILLGVLAGLLVLALLVLLLW) form a helical membrane-spanning segment. The Cytoplasmic portion of the chain corresponds to 1103–1179 (KLGFFKRAKH…PDGHPVPATA (77 aa)). The short motif at 1105–1109 (GFFKR) is the GFFKR motif element. The interval 1134-1153 (KEEKTGTIQRSNWGNSQWEG) is disordered. Polar residues predominate over residues 1139–1152 (GTIQRSNWGNSQWE). 3 consecutive repeat copies span residues 1155–1158 (DAHP), 1163–1166 (DWHP), and 1171–1174 (DGHP). The segment at 1155 to 1174 (DAHPILAADWHPELGPDGHP) is 3 X 4 AA repeats of D-X-H-P.

Belongs to the integrin alpha chain family. Heterodimer of an alpha and a beta subunit. The alpha subunit is composed of a heavy and a light chain linked by a disulfide bond. Alpha-7 associates with beta-1. Interacts with COMP. Interacts (via C-terminus intracellular tail region) with CIB1; the interaction is stabilized/increased in a calcium- and magnesium-dependent manner. ADP-ribosylated on at least two sites of the extracellular domain in skeletal myotubes (in vitro). In terms of processing, no proteolytic cleavage to produce the 70 kDa form is seen due to the presence of a Gly instead of an arginine residue at position 647. In terms of tissue distribution, isoforms containing segment X2 are found in adult heart, lung and skeletal muscle. Isoforms containing segment X1 are expressed in adult heart, lung and in proliferating skeletal myoblasts but not in adult skeletal muscle. Isoforms containing segment a are exclusively found in skeletal muscle. Isoforms containing segment B are widely expressed. In muscle fibers isoforms containing segment A and B are expressed at myotendinous and neuromuscular junctions; isoforms containing segment C are expressed at neuromuscular junctions and at extrasynaptic sites.

It localises to the membrane. Functionally, integrin alpha-7/beta-1 is the primary laminin receptor on skeletal myoblasts and adult myofibers. During myogenic differentiation, it may induce changes in the shape and mobility of myoblasts, and facilitate their localization at laminin-rich sites of secondary fiber formation. Involved in the maintenance of the myofibers cytoarchitecture as well as for their anchorage, viability and functional integrity. Mice carrying a ITGA7 null allele are viable and fertile, but show progressive muscular dystrophy starting soon after birth, but with a distinct variability in different muscle types. Required to promote contractile phenotype acquisition in differentiated airway smooth muscle (ASM) cells. Acts as a Schwann cell receptor for laminin-2. Acts as a receptor of COMP and mediates its effect on vascular smooth muscle cells (VSMCs) maturation. This Mus musculus (Mouse) protein is Integrin alpha-7 (Itga7).